The primary structure comprises 74 residues: Translational regulator CsrA (74 aa).

The protein belongs to the CsrA/RsmA family. Homodimer; the beta-strands of each monomer intercalate to form a hydrophobic core, while the alpha-helices form wings that extend away from the core.

The protein localises to the cytoplasm. In terms of biological role, a translational regulator that binds mRNA to regulate translation initiation and/or mRNA stability. Usually binds in the 5'-UTR at or near the Shine-Dalgarno sequence preventing ribosome-binding, thus repressing translation. Its main target seems to be the major flagellin gene, while its function is anatagonized by FliW. The chain is Translational regulator CsrA from Alkaliphilus oremlandii (strain OhILAs) (Clostridium oremlandii (strain OhILAs)).